The sequence spans 87 residues: Protein anon-73B1 (87 aa).

The chain crosses the membrane as a helical span at residues leucine 25–leucine 47. Residues asparagine 50–arginine 87 are disordered. The segment covering valine 63–arginine 72 has biased composition (basic and acidic residues). Residues threonine 73–arginine 87 show a composition bias toward basic residues.

It belongs to the UPF0239 family.

The protein localises to the membrane. In Drosophila simulans (Fruit fly), this protein is Protein anon-73B1 (anon-73B1).